A 523-amino-acid chain; its full sequence is Cytoplasmic dynein 1 light intermediate chain 1 (523 aa).

The tract at residues 1–45 is disordered; the sequence is MAAVGRVGSFGSSPPGLASTYASGPLANELASGSGGPAAGDDEDG. 74 to 81 contributes to the ATP binding site; it reads GEDGAGKT. Phosphoserine is present on Ser207. Thr213 is modified (phosphothreonine). 2 disordered regions span residues 387 to 434 and 457 to 523; these read PPTA…DPNM and GSPG…GEAS. Residues Ser398 and Ser405 each carry the phosphoserine modification. Thr408 bears the Phosphothreonine mark. 4 positions are modified to phosphoserine: Ser412, Ser419, Ser421, and Ser427. The span at 412-421 shows a compositional bias: low complexity; it reads SVSSNVASVS. Gly residues predominate over residues 458–473; that stretch reads SPGGPGVGGSPGGGAA. The segment covering 474-483 has biased composition (low complexity); it reads GASTSLPPSA. A phosphoserine mark is found at Ser486 and Ser510. Phosphothreonine is present on residues Thr512 and Thr513. The residue at position 516 (Ser516) is a Phosphoserine.

It belongs to the dynein light intermediate chain family. In terms of assembly, homodimer. The cytoplasmic dynein 1 complex consists of two catalytic heavy chains (HCs) and a number of non-catalytic subunits presented by intermediate chains (ICs), light intermediate chains (LICs) and light chains (LCs); the composition seems to vary in respect to the IC, LIC and LC composition. The heavy chain homodimer serves as a scaffold for the probable homodimeric assembly of the respective non-catalytic subunits. The ICs and LICs bind directly to the HC dimer and the LCs assemble on the IC dimer. Self-associates. Interacts with DYNC1H1; DYNC1LI1 and DYNC1LI2 bind mutually exclusive to DYNC1H1. Interacts with PCNT. Forms a complex with RAB11FIP3 and RAB11A1; the interaction between DYNC1LI1 and RAB11FIP3 is direct and induces DYNC1LI1 localization onto endosomal membrane; the complex regulates endocytic trafficking. Interacts with RUFY3. In terms of processing, phosphorylated during mitosis but not in interphase.

The protein resides in the cytoplasm. The protein localises to the chromosome. It is found in the centromere. Its subcellular location is the kinetochore. It localises to the cytoskeleton. The protein resides in the spindle pole. The protein localises to the recycling endosome membrane. Acts as one of several non-catalytic accessory components of the cytoplasmic dynein 1 complex that are thought to be involved in linking dynein to cargos and to adapter proteins that regulate dynein function. Cytoplasmic dynein 1 acts as a motor for the intracellular retrograde motility of vesicles and organelles along microtubules. May play a role in binding dynein to membranous organelles or chromosomes. Probably involved in the microtubule-dependent transport of pericentrin. Is required for progress through the spindle assembly checkpoint. The phosphorylated form appears to be involved in the selective removal of MAD1L1 and MAD1L2 but not BUB1B from kinetochores. Forms a functional Rab11/RAB11FIP3/dynein complex onto endosomal membrane that regulates the movement of peripheral sorting endosomes (SE) along microtubule tracks toward the microtubule organizing center/centrosome, generating the endosomal recycling compartment (ERC). This Rattus norvegicus (Rat) protein is Cytoplasmic dynein 1 light intermediate chain 1 (Dync1li1).